Consider the following 324-residue polypeptide: Olfactory receptor 52I1 (324 aa).

At 1-29 (MLGPAYNHTMETPASFLLVGIPGLQSSHL) the chain is on the extracellular side. A glycan (N-linked (GlcNAc...) asparagine) is linked at asparagine 7. Residues 30–50 (WLAISLSAMYITALLGNTLIV) form a helical membrane-spanning segment. At 51–58 (TAIWMDST) the chain is on the cytoplasmic side. The chain crosses the membrane as a helical span at residues 59 to 79 (RHEPMYCFLCVLAAVDIVMAS). Over 80–103 (SVVPKMVSIFCSGDSSISFSACFT) the chain is Extracellular. Residues cysteine 101 and cysteine 193 are joined by a disulfide bond. Residues 104-124 (QMFFVHLATAVETGLLLTMAF) traverse the membrane as a helical segment. Residues 125–143 (DRYVAICKPLHYKRILTPQ) are Cytoplasmic-facing. A helical membrane pass occupies residues 144 to 164 (VMLGMSMAVTIRAVTFMTPLS). At 165-200 (WMMNHLPFCGSNVVVHSYCKHIALARLACADPVPSS) the chain is on the extracellular side. The helical transmembrane segment at 201 to 221 (LYSLIGSSLMVGSDVAFIAAS) threads the bilayer. The Cytoplasmic segment spans residues 222 to 241 (YILILRAVFDLSSKTAQLKA). The chain crosses the membrane as a helical span at residues 242–262 (LSTCGSHVGVMALYYLPGMAS). Over 263-278 (IYAAWLGQDIVPLHTQ) the chain is Extracellular. The helical transmembrane segment at 279–299 (VLLADLYVIIPATLNPIIYGM) threads the bilayer. Over 300–324 (RTKQLLEGIWSYLMHFLFDHSNLGS) the chain is Cytoplasmic.

It belongs to the G-protein coupled receptor 1 family.

The protein localises to the cell membrane. Functionally, odorant receptor. In Homo sapiens (Human), this protein is Olfactory receptor 52I1 (OR52I1).